The following is a 427-amino-acid chain: Glutamate-1-semialdehyde 2,1-aminomutase (427 aa).

At K265 the chain carries N6-(pyridoxal phosphate)lysine.

It belongs to the class-III pyridoxal-phosphate-dependent aminotransferase family. HemL subfamily. As to quaternary structure, homodimer. Pyridoxal 5'-phosphate is required as a cofactor.

It localises to the cytoplasm. It catalyses the reaction (S)-4-amino-5-oxopentanoate = 5-aminolevulinate. The protein operates within porphyrin-containing compound metabolism; protoporphyrin-IX biosynthesis; 5-aminolevulinate from L-glutamyl-tRNA(Glu): step 2/2. This chain is Glutamate-1-semialdehyde 2,1-aminomutase, found in Bordetella avium (strain 197N).